The chain runs to 203 residues: Probable GTP-binding protein EngB (203 aa).

An EngB-type G domain is found at 21–196; it reads GAPEIAFLGR…WKKIFEAAGT (176 aa). GTP is bound by residues 29–36, 55–59, 79–82, 146–149, and 175–177; these read GRSNVGKS, GRTQT, DLPG, TKID, and FSA. Residues Ser-36 and Thr-57 each coordinate Mg(2+).

It belongs to the TRAFAC class TrmE-Era-EngA-EngB-Septin-like GTPase superfamily. EngB GTPase family. Mg(2+) is required as a cofactor.

Necessary for normal cell division and for the maintenance of normal septation. The polypeptide is Probable GTP-binding protein EngB (Koribacter versatilis (strain Ellin345)).